The chain runs to 284 residues: 4-diphosphocytidyl-2-C-methyl-D-erythritol kinase (284 aa).

Residue Lys10 is part of the active site. Pro95–Ser105 provides a ligand contact to ATP. Asp137 is an active-site residue.

The protein belongs to the GHMP kinase family. IspE subfamily.

The catalysed reaction is 4-CDP-2-C-methyl-D-erythritol + ATP = 4-CDP-2-C-methyl-D-erythritol 2-phosphate + ADP + H(+). It participates in isoprenoid biosynthesis; isopentenyl diphosphate biosynthesis via DXP pathway; isopentenyl diphosphate from 1-deoxy-D-xylulose 5-phosphate: step 3/6. Functionally, catalyzes the phosphorylation of the position 2 hydroxy group of 4-diphosphocytidyl-2C-methyl-D-erythritol. This is 4-diphosphocytidyl-2-C-methyl-D-erythritol kinase from Levilactobacillus brevis (strain ATCC 367 / BCRC 12310 / CIP 105137 / JCM 1170 / LMG 11437 / NCIMB 947 / NCTC 947) (Lactobacillus brevis).